A 401-amino-acid chain; its full sequence is MSEIISIKDINFKSGSKVFVRCDFNTPMDEFYNITDDRRIRSAIPTIRYILDQGCSVILASHLGRPKNGYEEKFSLLPVAKRLSRLIDREIIFANDVVGNDAKTKVAALKQGEVLLLENIRFEKGETKDDVALAKELSEYANYYVNDAFGVCHRAHSSVHAITKFYDEEHRAAGFLLIKEIEFARNLIKRPIRPFVAVVGGSKVSGKLQALTNLLPRVDKLIIGGGMAFTFLKAIGENIGNSLLEEDLIEEATNILKKGRELGVKIYLPVDVVAAQTFSAESAIKYVSTQEIPTGWMGLDIGPASVRLFREVLSDAQTIWWNGPMGVFEMDKFSKGSIKMSHAIAESFATTVVGGGDTADVVERAGDADEMTFISTGGGASLELIEGKELPGVKVLLKAES.

Residues 23–25 (DFN), Arg39, 62–65 (HLGR), Arg121, and Arg154 each bind substrate. ATP-binding positions include Lys207, Gly298, Glu329, and 355–358 (GGDT).

It belongs to the phosphoglycerate kinase family. As to quaternary structure, monomer.

Its subcellular location is the cytoplasm. It carries out the reaction (2R)-3-phosphoglycerate + ATP = (2R)-3-phospho-glyceroyl phosphate + ADP. Its pathway is carbohydrate degradation; glycolysis; pyruvate from D-glyceraldehyde 3-phosphate: step 2/5. This chain is Phosphoglycerate kinase, found in Campylobacter fetus subsp. fetus (strain 82-40).